The primary structure comprises 368 residues: UPF0284 protein Cyan7425_0342 (368 aa).

This sequence belongs to the UPF0284 family.

The chain is UPF0284 protein Cyan7425_0342 from Cyanothece sp. (strain PCC 7425 / ATCC 29141).